Here is a 743-residue protein sequence, read N- to C-terminus: Catalase-peroxidase (743 aa).

Residues 1–22 are disordered; that stretch reads MEKQSNDAAVAGAPNDHGAAKC. Positions 105–227 form a cross-link, tryptophyl-tyrosyl-methioninium (Trp-Tyr) (with M-253); that stretch reads WHSAGTYRIT…LGAVQMGLIY (123 aa). The active-site Proton acceptor is histidine 106. A cross-link (tryptophyl-tyrosyl-methioninium (Tyr-Met) (with W-105)) is located at residues 227–253; it reads YVNPEGPNGNPDPVAAAKDIRETFFRM. Histidine 268 lines the heme b pocket.

This sequence belongs to the peroxidase family. Peroxidase/catalase subfamily. Homodimer or homotetramer. Heme b serves as cofactor. Formation of the three residue Trp-Tyr-Met cross-link is important for the catalase, but not the peroxidase activity of the enzyme.

It catalyses the reaction H2O2 + AH2 = A + 2 H2O. It carries out the reaction 2 H2O2 = O2 + 2 H2O. Its function is as follows. Bifunctional enzyme with both catalase and broad-spectrum peroxidase activity. This is Catalase-peroxidase from Solibacter usitatus (strain Ellin6076).